Reading from the N-terminus, the 308-residue chain is Isoflavone reductase homolog (308 aa).

Residues 11–17, R36, and K45 contribute to the NADP(+) site; that span reads GGTGYIG. Catalysis depends on K133, which acts as the Proton acceptor. Position 137 (R137) interacts with NADP(+).

It belongs to the NmrA-type oxidoreductase family. Isoflavone reductase subfamily.

The protein localises to the cytoplasm. The chain is Isoflavone reductase homolog from Solanum tuberosum (Potato).